A 423-amino-acid chain; its full sequence is Protein CLP1 homolog (423 aa).

Residues glutamate 16, lysine 57, and 119-124 (DVGKST) each bind ATP.

The protein belongs to the Clp1 family. Clp1 subfamily.

The protein resides in the nucleus. Its function is as follows. Required for endonucleolytic cleavage during polyadenylation-dependent pre-mRNA 3'-end formation. The sequence is that of Protein CLP1 homolog (cbc) from Drosophila melanogaster (Fruit fly).